We begin with the raw amino-acid sequence, 595 residues long: DNA primase (595 aa).

The CHC2-type zinc finger occupies 38 to 62 (CPFHDEKTPSFIVYPTRGHYHCYGC). A Toprim domain is found at 251–331 (RRVILVEGQA…GITAIVCRLP (81 aa)). The Mg(2+) site is built by Glu257, Asp302, and Asp304. Basic and acidic residues predominate over residues 430 to 441 (KGKKVSAKEPSS). Residues 430–451 (KGKKVSAKEPSSESKQTSTEGK) are disordered.

This sequence belongs to the DnaG primase family. As to quaternary structure, monomer. Interacts with DnaB. Zn(2+) serves as cofactor. The cofactor is Mg(2+).

It catalyses the reaction ssDNA + n NTP = ssDNA/pppN(pN)n-1 hybrid + (n-1) diphosphate.. Its function is as follows. RNA polymerase that catalyzes the synthesis of short RNA molecules used as primers for DNA polymerase during DNA replication. This Chlamydia trachomatis serovar D (strain ATCC VR-885 / DSM 19411 / UW-3/Cx) protein is DNA primase.